The primary structure comprises 749 residues: Transcription factor RFX3 (749 aa).

The segment at residues 183–258 (HLQWLLDNYE…YHYYGIRVKP (76 aa)) is a DNA-binding region (RFX-type winged-helix). Residues 663–699 (VSPGNLDKDEGSEVESEMDEELDDSSEPQAKREKTEL) form a disordered region. The segment covering 674–688 (SEVESEMDEELDDSS) has biased composition (acidic residues).

It belongs to the RFX family. As to quaternary structure, heterodimer; heterodimerizes with RFX1 and RFX2, and RFX6.

The protein resides in the nucleus. In terms of biological role, transcription factor required for ciliogenesis and islet cell differentiation during endocrine pancreas development. Essential for the differentiation of nodal monocilia and left-right asymmetry specification during embryogenesis. Required for the biogenesis of motile cilia by governing growth and beating efficiency of motile cells. Also required for ciliated ependymal cell differentiation. Regulates the expression of genes involved in ciliary assembly (DYNC2LI1, FOXJ1 and BBS4) and genes involved in ciliary motility (DNAH11, DNAH9 and DNAH5). Together with RFX6, participates in the differentiation of 4 of the 5 islet cell types during endocrine pancreas development, with the exception of pancreatic PP (polypeptide-producing) cells. Regulates transcription by forming a heterodimer with another RFX protein and binding to the X-box in the promoter of target genes. Represses transcription of MAP1A in non-neuronal cells but not in neuronal cells. The protein is Transcription factor RFX3 (RFX3) of Macaca fascicularis (Crab-eating macaque).